Consider the following 229-residue polypeptide: MLHLVDYALLKPYLTLEEVARGARRAEELGVAAYCVNPLYAPYVRELLSRVKLCVVADFPFGAMPTAARAALVARIAEYAEEIDVVAPIGLVKSHMWGEVRRDLLSVVGAAGGRVVKVIVEEPYLTDEERHRLYDIVAESGAHFIKSSTGFAEEAYARQLGNPTYSTPERAAAIARYIRERGFRLGVKMAGGIRTAEQAKAIIDAIGFGTDPTKVRLGTSTPEALRTLG.

The Proton donor/acceptor role is filled by Asp-84. The active-site Schiff-base intermediate with acetaldehyde is Lys-146. Lys-188 functions as the Proton donor/acceptor in the catalytic mechanism.

This sequence belongs to the DeoC/FbaB aldolase family. DeoC type 1 subfamily.

The protein localises to the cytoplasm. It carries out the reaction 2-deoxy-D-ribose 5-phosphate = D-glyceraldehyde 3-phosphate + acetaldehyde. The protein operates within carbohydrate degradation; 2-deoxy-D-ribose 1-phosphate degradation; D-glyceraldehyde 3-phosphate and acetaldehyde from 2-deoxy-alpha-D-ribose 1-phosphate: step 2/2. In terms of biological role, catalyzes a reversible aldol reaction between acetaldehyde and D-glyceraldehyde 3-phosphate to generate 2-deoxy-D-ribose 5-phosphate. This is Deoxyribose-phosphate aldolase from Pyrobaculum neutrophilum (strain DSM 2338 / JCM 9278 / NBRC 100436 / V24Sta) (Thermoproteus neutrophilus).